The sequence spans 293 residues: Protease HtpX (293 aa).

Transmembrane regions (helical) follow at residues 4–24 (IALFLLTNLAVMVVFGLVLSL) and 34–54 (GLMIMALLFGFGGSFVSLLMS). Position 139 (His-139) interacts with Zn(2+). Residue Glu-140 is part of the active site. Residue His-143 participates in Zn(2+) binding. 2 consecutive transmembrane segments (helical) span residues 158–178 (VVNTFVIFISRILAQLAAGFM) and 193–213 (LIYFAVATVLELVFGILASII). Glu-222 contributes to the Zn(2+) binding site.

It belongs to the peptidase M48B family. It depends on Zn(2+) as a cofactor.

It is found in the cell inner membrane. The protein is Protease HtpX of Escherichia fergusonii (strain ATCC 35469 / DSM 13698 / CCUG 18766 / IAM 14443 / JCM 21226 / LMG 7866 / NBRC 102419 / NCTC 12128 / CDC 0568-73).